The sequence spans 215 residues: Cytochrome b6 (215 aa).

A helical transmembrane segment spans residues 32-52 (IFYCLGGITLTCFLVQVATGF). Cys-35 contributes to the heme c binding site. The heme b site is built by His-86 and His-100. The next 3 membrane-spanning stretches (helical) occupy residues 90–110 (ASMM…TGGF), 116–136 (LTWV…VTGY), and 186–206 (LHTF…FLMI). Heme b contacts are provided by His-187 and His-202.

Belongs to the cytochrome b family. PetB subfamily. As to quaternary structure, the 4 large subunits of the cytochrome b6-f complex are cytochrome b6, subunit IV (17 kDa polypeptide, PetD), cytochrome f and the Rieske protein, while the 4 small subunits are PetG, PetL, PetM and PetN. The complex functions as a dimer. Requires heme b as cofactor. Heme c is required as a cofactor.

Its subcellular location is the plastid. It localises to the chloroplast thylakoid membrane. Component of the cytochrome b6-f complex, which mediates electron transfer between photosystem II (PSII) and photosystem I (PSI), cyclic electron flow around PSI, and state transitions. The sequence is that of Cytochrome b6 from Hordeum vulgare (Barley).